The primary structure comprises 490 residues: UDP-glycosyltransferase 73C7 (490 aa).

UDP-alpha-D-glucose contacts are provided by residues Ser291, 351 to 353 (APQ), 368 to 376 (HCGWNSTLE), and 390 to 393 (FAEQ).

It belongs to the UDP-glycosyltransferase family.

The protein is UDP-glycosyltransferase 73C7 (UGT73C7) of Arabidopsis thaliana (Mouse-ear cress).